Reading from the N-terminus, the 278-residue chain is Transmembrane protein 45B (278 aa).

The next 7 membrane-spanning stretches (helical) occupy residues 7-27 (HALPGSFFLIFGLWWSVKYPL), 49-69 (IIEGAVKALFAVIGILAEQFV), 95-115 (YLFFGVSGIIDMLTYLYFNIV), 117-137 (LGLDRVVLAMAVFVEGFLFYF), 149-169 (IHSLLLFSLFGATISICLEVI), 183-203 (LLILQGTWFWQIGFVLFPPFG), and 215-235 (VMFITMCFCWHYLVALCITAI). Residues Ser273 and Ser275 each carry the phosphoserine modification.

Belongs to the TMEM45 family.

The protein resides in the endosome membrane. It localises to the lysosome membrane. Its subcellular location is the golgi apparatus. It is found in the trans-Golgi network membrane. In terms of biological role, plays a role in innate immunity. The polypeptide is Transmembrane protein 45B (Tmem45b) (Rattus norvegicus (Rat)).